The chain runs to 547 residues: Probable protein kinase UbiB (547 aa).

The Protein kinase domain maps to 121–501; sequence EFSPDPMASA…QLRSERRWRR (381 aa). Residues 127-135 and Lys149 contribute to the ATP site; that span reads MASASVAQV. Asp284 acts as the Proton acceptor in catalysis. A run of 2 helical transmembrane segments spans residues 502–522 and 523–543; these read GFIA…HAGQ and WLAD…GVML.

This sequence belongs to the ABC1 family. UbiB subfamily.

The protein resides in the cell inner membrane. It participates in cofactor biosynthesis; ubiquinone biosynthesis [regulation]. In terms of biological role, is probably a protein kinase regulator of UbiI activity which is involved in aerobic coenzyme Q (ubiquinone) biosynthesis. The polypeptide is Probable protein kinase UbiB (Marinobacter nauticus (strain ATCC 700491 / DSM 11845 / VT8) (Marinobacter aquaeolei)).